The chain runs to 380 residues: Alcohol dehydrogenase 1 (380 aa).

The Zn(2+) site is built by cysteine 48, threonine 50, histidine 70, cysteine 100, cysteine 103, cysteine 106, cysteine 114, and cysteine 178. 2 residues coordinate an alcohol: threonine 50 and histidine 70. Position 50 (threonine 50) interacts with NAD(+). Residues 203 to 208 (GLGAVG), aspartate 227, arginine 232, threonine 273, valine 296, 296 to 298 (VGV), and arginine 373 contribute to the NAD(+) site.

This sequence belongs to the zinc-containing alcohol dehydrogenase family. As to quaternary structure, homodimer. The cofactor is Zn(2+).

The protein resides in the cytoplasm. It catalyses the reaction a primary alcohol + NAD(+) = an aldehyde + NADH + H(+). It carries out the reaction a secondary alcohol + NAD(+) = a ketone + NADH + H(+). The chain is Alcohol dehydrogenase 1 (ADH1) from Trifolium repens (Creeping white clover).